An 84-amino-acid polypeptide reads, in one-letter code: Large ribosomal subunit protein bL31B (84 aa).

This sequence belongs to the bacterial ribosomal protein bL31 family. Type B subfamily. In terms of assembly, part of the 50S ribosomal subunit.

This Acinetobacter baumannii (strain AB307-0294) protein is Large ribosomal subunit protein bL31B.